The chain runs to 296 residues: MNLQTMIRTLQDYWSEQGCIMLQSYDVEKGAGTMSPYTFLKAIGPEPWKAGYIEPSRRPADGRYGENPNRLFQHHQFQVVMKPSPDNIQELYLGSLEKLGINPLEHDIRFVEDNWENPSLGCAGLGWEVWLDGMEITQFTYFQQVGGLECFPVTSEITYGVERLASYIQDKENVFDLEWTEGISYRDIFFQAEFENSTYAFETSNTDMLLTLFDTYEREAARQMQEGLVFPAYDYVLKCSHTFNLLDARGVVSVTERAQYIGRIRNLARRVAKTFYESREKLGFPLVKEEGGKRHE.

The protein belongs to the class-II aminoacyl-tRNA synthetase family. In terms of assembly, tetramer of two alpha and two beta subunits.

The protein resides in the cytoplasm. The enzyme catalyses tRNA(Gly) + glycine + ATP = glycyl-tRNA(Gly) + AMP + diphosphate. The protein is Glycine--tRNA ligase alpha subunit of Listeria welshimeri serovar 6b (strain ATCC 35897 / DSM 20650 / CCUG 15529 / CIP 8149 / NCTC 11857 / SLCC 5334 / V8).